Here is a 2971-residue protein sequence, read N- to C-terminus: uncharacterized protein (2971 aa).

A disordered region spans residues 929–964 (SANFSNGPEESSLSTRLHIQKKRKAKKQRLETRRQK). Polar residues predominate over residues 936–945 (PEESSLSTRL). The segment covering 946–955 (HIQKKRKAKK) has biased composition (basic residues).

Its subcellular location is the plastid. The protein resides in the chloroplast. This is an uncharacterized protein from Chlamydomonas reinhardtii (Chlamydomonas smithii).